The primary structure comprises 268 residues: Ribosomal RNA small subunit methyltransferase A (268 aa).

Asn23, Ile25, Gly50, Glu72, Asp97, and Asn116 together coordinate S-adenosyl-L-methionine.

Belongs to the class I-like SAM-binding methyltransferase superfamily. rRNA adenine N(6)-methyltransferase family. RsmA subfamily.

It is found in the cytoplasm. It catalyses the reaction adenosine(1518)/adenosine(1519) in 16S rRNA + 4 S-adenosyl-L-methionine = N(6)-dimethyladenosine(1518)/N(6)-dimethyladenosine(1519) in 16S rRNA + 4 S-adenosyl-L-homocysteine + 4 H(+). Its function is as follows. Specifically dimethylates two adjacent adenosines (A1518 and A1519) in the loop of a conserved hairpin near the 3'-end of 16S rRNA in the 30S particle. May play a critical role in biogenesis of 30S subunits. This is Ribosomal RNA small subunit methyltransferase A from Rickettsia bellii (strain OSU 85-389).